The primary structure comprises 241 residues: Phosphoglycolate phosphatase (241 aa).

D8 acts as the Nucleophile in catalysis. Residues D8, D10, and D174 each coordinate Mg(2+).

It belongs to the HAD-like hydrolase superfamily. CbbY/CbbZ/Gph/YieH family. It depends on Mg(2+) as a cofactor.

It carries out the reaction 2-phosphoglycolate + H2O = glycolate + phosphate. It participates in organic acid metabolism; glycolate biosynthesis; glycolate from 2-phosphoglycolate: step 1/1. In terms of biological role, specifically catalyzes the dephosphorylation of 2-phosphoglycolate. Is involved in the dissimilation of the intracellular 2-phosphoglycolate formed during the DNA repair of 3'-phosphoglycolate ends, a major class of DNA lesions induced by oxidative stress. The sequence is that of Phosphoglycolate phosphatase from Rhodospirillum rubrum (strain ATCC 11170 / ATH 1.1.1 / DSM 467 / LMG 4362 / NCIMB 8255 / S1).